Here is a 170-residue protein sequence, read N- to C-terminus: MELKNLIREIPNFPKSGIIFRDITTLLSNTDGLHYTIDILTEKCLEFKPDYVVGIESRGFIFGMPLAYQLNVGFIPVRKPGKLPAEVYSVSYDLEYGQDSLEVHQDAMPAGSRVLVIDDLLATGGTAGATTQLIEKAKCNLVGFAFVIELKELGGREKLPKVPIISLIEY.

Belongs to the purine/pyrimidine phosphoribosyltransferase family. Homodimer.

It localises to the cytoplasm. The enzyme catalyses AMP + diphosphate = 5-phospho-alpha-D-ribose 1-diphosphate + adenine. It functions in the pathway purine metabolism; AMP biosynthesis via salvage pathway; AMP from adenine: step 1/1. Functionally, catalyzes a salvage reaction resulting in the formation of AMP, that is energically less costly than de novo synthesis. The polypeptide is Adenine phosphoribosyltransferase (Trichodesmium erythraeum (strain IMS101)).